The sequence spans 620 residues: Chaperone protein HscA homolog (620 aa).

The protein belongs to the heat shock protein 70 family.

Its function is as follows. Chaperone involved in the maturation of iron-sulfur cluster-containing proteins. Has a low intrinsic ATPase activity which is markedly stimulated by HscB. The protein is Chaperone protein HscA homolog of Shewanella sediminis (strain HAW-EB3).